The sequence spans 364 residues: Protein FAM81A (364 aa).

Coiled coils occupy residues 75-107, 158-189, and 261-287; these read FLEE…RDNI, NKEQ…VDLS, and ANER…QKRN. The interval 281–300 is disordered; it reads EESQKRNAEGQRKPDEEKVH.

The protein belongs to the FAM81 family. Interacts with DLG4/PSD-95, GRIN2B/GLUN2B and SYNGAP1; the interactions facilitate condensate formation. As to expression, expressed in most regions of the brain (at protein level).

The protein localises to the postsynaptic density. Its subcellular location is the cytoplasm. Facilitates the interaction and assembly of proteins within the postsynaptic density by promoting the condensation of postsynaptic proteins via liquid-liquid phase separation. Required for neuronal activity. Accumulation at the postsynaptic density results in enlargement of dendritic spines. This chain is Protein FAM81A (Fam81a), found in Mus musculus (Mouse).